Here is a 280-residue protein sequence, read N- to C-terminus: Ribosomal RNA-processing protein 7 homolog A (280 aa).

Over residues 1–10 (MVSRRKKRKA) the composition is skewed to basic residues. The tract at residues 1–24 (MVSRRKKRKAGGHEESIPSPPGYS) is disordered. The 101-residue stretch at 59 to 159 (RTLFILNVPP…SGIHKWISDY (101 aa)) folds into the RRM domain. At serine 99 the chain carries Phosphoserine.

The protein belongs to the RRP7 family. In terms of assembly, part of the small subunit (SSU) processome, composed of more than 70 proteins and the RNA chaperone small nucleolar RNA (snoRNA) U3. Interacts with NOL6; required for NOL6 localization to nucleolus.

The protein localises to the nucleus. The protein resides in the nucleolus. It is found in the cell projection. Its subcellular location is the cilium. It localises to the cytoplasm. The protein localises to the cytoskeleton. The protein resides in the microtubule organizing center. It is found in the centrosome. In terms of biological role, nucleolar protein that is involved in ribosomal RNA (rRNA) processing. Also plays a role in primary cilia resorption, and cell cycle progression in neurogenesis and neocortex development. Part of the small subunit (SSU) processome, first precursor of the small eukaryotic ribosomal subunit. During the assembly of the SSU processome in the nucleolus, many ribosome biogenesis factors, an RNA chaperone and ribosomal proteins associate with the nascent pre-rRNA and work in concert to generate RNA folding, modifications, rearrangements and cleavage as well as targeted degradation of pre-ribosomal RNA by the RNA exosome. The protein is Ribosomal RNA-processing protein 7 homolog A (Rrp7a) of Mus musculus (Mouse).